Reading from the N-terminus, the 695-residue chain is C6 finger domain transcription factor nscR (695 aa).

The segment at residues 17 to 43 (CELCRERKVKCDKLDPCTNCASAGVVC) is a DNA-binding region (zn(2)-C6 fungal-type). The span at 101 to 113 (SMRSSASQSSNQD) shows a compositional bias: low complexity. Residues 101 to 146 (SMRSSASQSSNQDQESRDAIESISNETEDASAPTPDSSRMPLGDGG) form a disordered region.

The protein localises to the nucleus. Functionally, transcription factor that specifically regulates the neosartoricin B biosynthesis gene cluster. This chain is C6 finger domain transcription factor nscR, found in Arthroderma otae (strain ATCC MYA-4605 / CBS 113480) (Microsporum canis).